A 545-amino-acid polypeptide reads, in one-letter code: Coiled-coil domain-containing protein 60 (545 aa).

Residues 72 to 99 adopt a coiled-coil conformation; the sequence is NILREENAMKKKQQLLQKLKEEELNKFQ. Positions 224–284 are disordered; sequence PAIRTAMASR…DNESSSTKPE (61 aa). Positions 238–259 are enriched in low complexity; that stretch reads RGSTLSLTRTSGGSSPQSSMMS.

The chain is Coiled-coil domain-containing protein 60 (Ccdc60) from Mus musculus (Mouse).